Consider the following 139-residue polypeptide: Transcription antitermination protein NusB (139 aa).

Belongs to the NusB family.

In terms of biological role, involved in transcription antitermination. Required for transcription of ribosomal RNA (rRNA) genes. Binds specifically to the boxA antiterminator sequence of the ribosomal RNA (rrn) operons. This chain is Transcription antitermination protein NusB, found in Sodalis glossinidius (strain morsitans).